Here is a 258-residue protein sequence, read N- to C-terminus: UPF0246 protein Pnec_1068 (258 aa).

It belongs to the UPF0246 family.

This chain is UPF0246 protein Pnec_1068, found in Polynucleobacter necessarius subsp. necessarius (strain STIR1).